The sequence spans 456 residues: Peptide chain release factor PrfB1, chloroplastic (456 aa).

The transit peptide at 1–58 (MSMELTVLGPLAGRSFAIAGKPKLLLLRPTNLPLLRLSLPLSLPNFSSSSRFNSPIVF) directs the protein to the chloroplast.

It belongs to the prokaryotic/mitochondrial release factor family. In terms of tissue distribution, expressed in leaves, stems and flowers.

The protein localises to the plastid. The protein resides in the chloroplast stroma. Functionally, directs the termination of translation in response to the peptide chain termination codon UGA. Required for the proper translation, stability and normal processing of UGA-containing polycistronic transcripts in chloroplasts. The sequence is that of Peptide chain release factor PrfB1, chloroplastic from Arabidopsis thaliana (Mouse-ear cress).